Here is a 353-residue protein sequence, read N- to C-terminus: UPF0283 membrane protein YcjF (353 aa).

The segment covering 1–19 (MSEPLKPRIDFAEPLKEEP) has biased composition (basic and acidic residues). A disordered region spans residues 1–35 (MSEPLKPRIDFAEPLKEEPTSAFKAQQTFSEAESR). At 1–69 (MSEPLKPRID…LRPKRSLWRK (69 aa)) the chain is on the periplasmic side. The helical transmembrane segment at 70-90 (MVMGGLALFGASVVGQGVQWT) threads the bilayer. Over 91–99 (MNAWQTQDW) the chain is Cytoplasmic. Residues 100–120 (VALGGCAAGALIVGAGVGSVV) form a helical membrane-spanning segment. The Periplasmic segment spans residues 121–212 (TEWRRLWRLR…ARREISRFAA (92 aa)). Residues 213–233 (ESTLMIAVSPLALVDMAFIAW) traverse the membrane as a helical segment. Residues 234-353 (RNLRLINRIA…LQKSKSSPEK (120 aa)) lie on the Cytoplasmic side of the membrane.

It belongs to the UPF0283 family.

It is found in the cell inner membrane. The chain is UPF0283 membrane protein YcjF (ycjF) from Salmonella typhimurium (strain LT2 / SGSC1412 / ATCC 700720).